We begin with the raw amino-acid sequence, 189 residues long: Acireductone dioxygenase 1 (189 aa).

Fe(2+) contacts are provided by histidine 102, histidine 104, glutamate 108, and histidine 146. 4 residues coordinate Ni(2+): histidine 102, histidine 104, glutamate 108, and histidine 146.

Belongs to the acireductone dioxygenase (ARD) family. In terms of assembly, monomer. The cofactor is Fe(2+). It depends on Ni(2+) as a cofactor.

The catalysed reaction is 1,2-dihydroxy-5-(methylsulfanyl)pent-1-en-3-one + O2 = 3-(methylsulfanyl)propanoate + CO + formate + 2 H(+). The enzyme catalyses 1,2-dihydroxy-5-(methylsulfanyl)pent-1-en-3-one + O2 = 4-methylsulfanyl-2-oxobutanoate + formate + 2 H(+). Its pathway is amino-acid biosynthesis; L-methionine biosynthesis via salvage pathway; L-methionine from S-methyl-5-thio-alpha-D-ribose 1-phosphate: step 5/6. Catalyzes 2 different reactions between oxygen and the acireductone 1,2-dihydroxy-3-keto-5-methylthiopentene (DHK-MTPene) depending upon the metal bound in the active site. Fe-containing acireductone dioxygenase (Fe-ARD) produces formate and 2-keto-4-methylthiobutyrate (KMTB), the alpha-ketoacid precursor of methionine in the methionine recycle pathway. Ni-containing acireductone dioxygenase (Ni-ARD) produces methylthiopropionate, carbon monoxide and formate, and does not lie on the methionine recycle pathway. The polypeptide is Acireductone dioxygenase 1 (Nocardia farcinica (strain IFM 10152)).